The primary structure comprises 279 residues: RRP15-like protein (279 aa).

Disordered stretches follow at residues 1–40 (MALLTAKRPKKEAAPATDTSNNESDSEDSQNVDGDTGANA), 56–120 (GPTV…TERR), and 200–279 (KSTA…DEED). The span at 73–83 (KTSEAAKKPGF) shows a compositional bias: basic and acidic residues. 2 stretches are compositionally biased toward acidic residues: residues 93-104 (KEEDDDDEEDGD) and 213-224 (QETDDDDEDDTA). Residues 232 to 245 (KKSEWNVLREDFMT) show a composition bias toward basic and acidic residues. Over residues 267 to 279 (DEADDSDDDDEED) the composition is skewed to acidic residues.

This sequence belongs to the RRP15 family.

This is RRP15-like protein from Drosophila pseudoobscura pseudoobscura (Fruit fly).